The sequence spans 374 residues: Tuliposide A-converting enzyme b1, amyloplastic (374 aa).

Residues 1-68 (MSVALFCGPP…TNSSLSPSPT (68 aa)) constitute an amyloplast transit peptide. Residue Ser-226 is the Acyl-ester intermediate of the active site. Residues Asp-316 and His-348 each act as charge relay system in the active site.

This sequence belongs to the AB hydrolase superfamily. As to quaternary structure, homodimer. As to expression, highly expressed in pistil and bulb scales. Lower expression in stem, and barely detected in root, leaf, petal and stamen.

It is found in the plastid. Its subcellular location is the amyloplast. It carries out the reaction 6-tuliposide A = tulipalin A + D-glucose. Functionally, lactone-forming carboxylesterases, specifically catalyzing intramolecular transesterification, but not hydrolysis. Involved in the biosynthesis of tulipalins, defensive chemicals that show antimicrobial activities against a broad range of strains of bacteria and fungi. Substrates are 6-tuliposide A &gt; 6-tuliposide B. This is Tuliposide A-converting enzyme b1, amyloplastic (TCEA-B1) from Tulipa gesneriana (Garden tulip).